Here is a 530-residue protein sequence, read N- to C-terminus: Glutamate--tRNA ligase (530 aa).

Positions 26–36 match the 'HIGH' region motif; the sequence is PSPTGKAHIGT. A 'KMSKS' region motif is present at residues 267–271; that stretch reads KLSKR. Lysine 270 lines the ATP pocket.

This sequence belongs to the class-I aminoacyl-tRNA synthetase family. Glutamate--tRNA ligase type 1 subfamily. Monomer.

The protein resides in the cytoplasm. It catalyses the reaction tRNA(Glu) + L-glutamate + ATP = L-glutamyl-tRNA(Glu) + AMP + diphosphate. Functionally, catalyzes the attachment of glutamate to tRNA(Glu) in a two-step reaction: glutamate is first activated by ATP to form Glu-AMP and then transferred to the acceptor end of tRNA(Glu). In Gloeobacter violaceus (strain ATCC 29082 / PCC 7421), this protein is Glutamate--tRNA ligase.